Reading from the N-terminus, the 634-residue chain is Leucine--tRNA ligase subunit alpha (634 aa).

Positions 43–51 match the 'HIGH' region motif; it reads PSGRIHMGH.

This sequence belongs to the class-I aminoacyl-tRNA synthetase family. Seems to consist of an alpha chain and a beta chain.

It localises to the cytoplasm. The enzyme catalyses tRNA(Leu) + L-leucine + ATP = L-leucyl-tRNA(Leu) + AMP + diphosphate. This is Leucine--tRNA ligase subunit alpha (leuS) from Aquifex aeolicus (strain VF5).